Here is a 120-residue protein sequence, read N- to C-terminus: Large ribosomal subunit protein uL18 (120 aa).

This sequence belongs to the universal ribosomal protein uL18 family. As to quaternary structure, part of the 50S ribosomal subunit; part of the 5S rRNA/L5/L18/L25 subcomplex. Contacts the 5S and 23S rRNAs.

Its function is as follows. This is one of the proteins that bind and probably mediate the attachment of the 5S RNA into the large ribosomal subunit, where it forms part of the central protuberance. This Janthinobacterium sp. (strain Marseille) (Minibacterium massiliensis) protein is Large ribosomal subunit protein uL18.